The chain runs to 243 residues: Homeobox protein nob-1 (243 aa).

The segment covering 1 to 12 has biased composition (polar residues); that stretch reads MISVMQQMINND. Disordered stretches follow at residues 1–23 and 40–67; these read MISV…SITS and SIQG…TGMV. A DNA-binding region (homeobox) is located at residues 162 to 221; that stretch reads GKKKRQPYKKDQISRLEYEYSVNQYLTNKRRSELSAQLMLDEKQVKVWFQNRRMKDKKLR.

The protein belongs to the abd-b homeobox family. As to quaternary structure, interacts with nuclear receptor nhr-25. Interacts with geminin homolog gmn-1. Interacts with homeodomain protein ceh-20.

It is found in the nucleus. Functionally, transcription factor, involved in posterior embryonic patterning, morphogenetic movements of the posterior hypodermis, and cell fate specification. Binds to the 5'-TAGT-3' motif in regulatory elements of genes, including Meis protein psa-3 and microRNA mir-57. Involved in a negative regulatory loop with mir-57 to specify posterior cell identities. Required for asymmetric division of the T hypodermal cell, acting via the regulation of asymmetric expression of psa-3 in cooperation with ceh-20 and the Wnt-MAPK pathway. Involved in the regulation of the onset of non-apoptotic cell death in the linker cell, acting together with the Wnt signaling pathway. Involved in promoting embryogenesis, in concert with orphan nuclear receptor nhr-25. May regulate expression of transcription factor dmd-3. This chain is Homeobox protein nob-1, found in Caenorhabditis elegans.